We begin with the raw amino-acid sequence, 131 residues long: Protein NEGATIVE REGULATOR OF RESISTANCE (131 aa).

Disordered stretches follow at residues 1-33 (MDAT…DEVS) and 51-131 (TRRL…RAPA). The short motif at 12–15 (KRKR) is the Nuclear localization signal element. Residues 116–131 (PPSDAPATPRSARAPA) are compositionally biased toward low complexity.

It belongs to the NPR1-interactor family. As to quaternary structure, interacts with NPR1/NH1. Interacts with NPR2/NH2.

The protein resides in the nucleus. Functionally, acts as a negative regulator of disease resistance. Acts on basal resistance, age-related resistance and resistance mediated by the LRR receptor kinase XA21. Plants over-expressing NRR display enhanced susceptibility to the bacterial blight Xanthomonas oryzae pv. oryzae (Xoo). The chain is Protein NEGATIVE REGULATOR OF RESISTANCE from Oryza sativa subsp. indica (Rice).